Here is a 396-residue protein sequence, read N- to C-terminus: S-adenosylmethionine synthase (396 aa).

Residue His16 coordinates ATP. Mg(2+) is bound at residue Asp18. Residue Glu44 participates in K(+) binding. The L-methionine site is built by Glu57 and Gln100. Residues 100–110 (QSPDIAQGVDR) form a flexible loop region. ATP contacts are provided by residues 167–169 (DAK), 232–233 (RF), Asp241, 247–248 (RK), Ala264, and Lys268. An L-methionine-binding site is contributed by Asp241. Lys272 contacts L-methionine.

This sequence belongs to the AdoMet synthase family. As to quaternary structure, homotetramer; dimer of dimers. Requires Mg(2+) as cofactor. K(+) serves as cofactor.

The protein localises to the cytoplasm. The enzyme catalyses L-methionine + ATP + H2O = S-adenosyl-L-methionine + phosphate + diphosphate. It functions in the pathway amino-acid biosynthesis; S-adenosyl-L-methionine biosynthesis; S-adenosyl-L-methionine from L-methionine: step 1/1. In terms of biological role, catalyzes the formation of S-adenosylmethionine (AdoMet) from methionine and ATP. The overall synthetic reaction is composed of two sequential steps, AdoMet formation and the subsequent tripolyphosphate hydrolysis which occurs prior to release of AdoMet from the enzyme. In Ralstonia pickettii (strain 12J), this protein is S-adenosylmethionine synthase.